Consider the following 135-residue polypeptide: NADPH-dependent 7-cyano-7-deazaguanine reductase (135 aa).

Cys48 acts as the Thioimide intermediate in catalysis. The Proton donor role is filled by Asp55. Substrate is bound by residues 70–72 and 89–90; these read IEL and HE.

It belongs to the GTP cyclohydrolase I family. QueF type 1 subfamily.

The protein resides in the cytoplasm. It carries out the reaction 7-aminomethyl-7-carbaguanine + 2 NADP(+) = 7-cyano-7-deazaguanine + 2 NADPH + 3 H(+). Its pathway is tRNA modification; tRNA-queuosine biosynthesis. Its function is as follows. Catalyzes the NADPH-dependent reduction of 7-cyano-7-deazaguanine (preQ0) to 7-aminomethyl-7-deazaguanine (preQ1). This Prochlorococcus marinus (strain MIT 9313) protein is NADPH-dependent 7-cyano-7-deazaguanine reductase.